The following is a 515-amino-acid chain: SWI/SNF-related matrix-associated actin-dependent regulator of chromatin subfamily D member 1 (515 aa).

The segment at 1–128 (MAARAGFQSV…RNHNAKKKKM (128 aa)) is disordered. Residues 14–23 (GGAGASGGAG) show a composition bias toward gly residues. The interaction with ESR1, NR1H4, NR3C1, PGR and SMARCA4 stretch occupies residues 43–167 (APGQGLYRSP…DQTIMRKRLD (125 aa)). Asymmetric dimethylarginine is present on residues arginine 68 and arginine 88. Lysine 101 is covalently cross-linked (Glycyl lysine isopeptide (Lys-Gly) (interchain with G-Cter in SUMO2)). The segment covering 104-117 (APQQIQQVQQQAVQ) has biased composition (low complexity). An interaction with SMARCC1 and SMARCC2 region spans residues 168-474 (IQEALKRPIK…TMTDVVGNPE (307 aa)). Residues 180-515 (RKLRIFISNT…LEQALGIRNT (336 aa)) form a necessary for GR/NR3C1-mediated remodeling and transcription from chromatin; required for GR/NR3C1 interaction with the BRG1/SMARCA4 complex in vivo region. Threonine 203 carries the post-translational modification Phosphothreonine. Lysine 223 carries the N6-acetyllysine modification. The SWIB/MDM2 domain maps to 290–367 (YQPPQFKLDP…PQRLHALLMP (78 aa)). Positions 412-440 (ASQQEIATLDNKIHETIETINQLKTQREF) form a coiled coil.

This sequence belongs to the SMARCD family. Component of the multiprotein chromatin-remodeling complexes SWI/SNF: SWI/SNF-A (BAF), SWI/SNF-B (PBAF) and related complexes. The canonical complex contains a catalytic subunit (either SMARCA4/BRG1/BAF190A or SMARCA2/BRM/BAF190B), and at least SMARCE1, ACTL6A/BAF53, SMARCC1/BAF155, SMARCC2/BAF170, and SMARCB1/SNF5/BAF47. Other subunits specific to each of the complexes may also be present permitting several possible combinations developmentally and tissue specific. Component of the BAF complex, which includes at least actin (ACTB), ARID1A/BAF250A, ARID1B/BAF250B, SMARCA2/BRM, SMARCA4/BRG1/BAF190A, ACTL6A/BAF53, ACTL6B/BAF53B, SMARCE1/BAF57, SMARCC1/BAF155, SMARCC2/BAF170, SMARCB1/SNF5/INI1, and one or more SMARCD1/BAF60A, SMARCD2/BAF60B, or SMARCD3/BAF60C. In muscle cells, the BAF complex also contains DPF3. Component of neural progenitors-specific chromatin remodeling complex (npBAF complex) composed of at least, ARID1A/BAF250A or ARID1B/BAF250B, SMARCD1/BAF60A, SMARCD3/BAF60C, SMARCA2/BRM/BAF190B, SMARCA4/BRG1/BAF190A, SMARCB1/BAF47, SMARCC1/BAF155, SMARCE1/BAF57, SMARCC2/BAF170, PHF10/BAF45A, ACTL6A/BAF53A and actin. Component of neuron-specific chromatin remodeling complex (nBAF complex) composed of at least, ARID1A/BAF250A or ARID1B/BAF250B, SMARCD1/BAF60A, SMARCD3/BAF60C, SMARCA2/BRM/BAF190B, SMARCA4/BRG1/BAF190A, SMARCB1/BAF47, SMARCC1/BAF155, SMARCE1/BAF57, SMARCC2/BAF170, DPF1/BAF45B, DPF3/BAF45C, ACTL6B/BAF53B and actin. Component of the SWI/SNF-B (PBAF) chromatin remodeling complex, at least composed of SMARCA4/BRG1, SMARCB1/BAF47/SNF5, ACTL6A/BAF53A or ACTL6B/BAF53B, SMARCE1/BAF57, SMARCD1/BAF60A, SMARCD2/BAF60B, perhaps SMARCD3/BAF60C, SMARCC1/BAF155, SMARCC2/BAF170, PBRM1/BAF180, ARID2/BAF200 and actin (ACTB). Component of SWI/SNF (GBAF) subcomplex, which includes at least BICRA or BICRAL (mutually exclusive), BRD9, SS18, SMARCA2/BRM, SMARCA4/BRG1/BAF190A, ACTL6A/BAF53, SMARCC1/BAF155, and SMARCD1/BAF60A. Specifically interacts with the VDR heterodimer complex. Interacts with ESR1, NR3C1, NR1H4, PGR, SMARCA4, SMARCC1 and SMARCC2. Interacts with DPF2. Interacts with DPF3a (isoform 2 of DPF3/BAF45C) and with HDGFL2 in a DPF3a-dependent manner. Interacts with FOS, FOSB isoform 1 and 2, FOSL1 and FOSL2. Interacts with AKIRIN2. In terms of tissue distribution, ubiquitous.

It is found in the nucleus. Functionally, involved in transcriptional activation and repression of select genes by chromatin remodeling (alteration of DNA-nucleosome topology). Component of SWI/SNF chromatin remodeling complexes that carry out key enzymatic activities, changing chromatin structure by altering DNA-histone contacts within a nucleosome in an ATP-dependent manner. Belongs to the neural progenitors-specific chromatin remodeling complex (npBAF complex) and the neuron-specific chromatin remodeling complex (nBAF complex). During neural development a switch from a stem/progenitor to a postmitotic chromatin remodeling mechanism occurs as neurons exit the cell cycle and become committed to their adult state. The transition from proliferating neural stem/progenitor cells to postmitotic neurons requires a switch in subunit composition of the npBAF and nBAF complexes. As neural progenitors exit mitosis and differentiate into neurons, npBAF complexes which contain ACTL6A/BAF53A and PHF10/BAF45A, are exchanged for homologous alternative ACTL6B/BAF53B and DPF1/BAF45B or DPF3/BAF45C subunits in neuron-specific complexes (nBAF). The npBAF complex is essential for the self-renewal/proliferative capacity of the multipotent neural stem cells. The nBAF complex along with CREST plays a role regulating the activity of genes essential for dendrite growth. Has a strong influence on vitamin D-mediated transcriptional activity from an enhancer vitamin D receptor element (VDRE). May be a link between mammalian SWI-SNF-like chromatin remodeling complexes and the vitamin D receptor (VDR) heterodimer. Mediates critical interactions between nuclear receptors and the BRG1/SMARCA4 chromatin-remodeling complex for transactivation. The sequence is that of SWI/SNF-related matrix-associated actin-dependent regulator of chromatin subfamily D member 1 (Smarcd1) from Mus musculus (Mouse).